The following is a 280-amino-acid chain: Ribosomal RNA-processing protein 7 homolog A (280 aa).

The RRM domain maps to 59-159; the sequence is RTLFVLNVPP…SGIHKWISDY (101 aa). Ser-99 carries the phosphoserine modification.

The protein belongs to the RRP7 family. In terms of assembly, part of the small subunit (SSU) processome, composed of more than 70 proteins and the RNA chaperone small nucleolar RNA (snoRNA) U3. Interacts with NOL6; required for NOL6 localization to nucleolus. In terms of tissue distribution, expressed in the apical radial glial cells in the developing brain.

It is found in the nucleus. The protein resides in the nucleolus. The protein localises to the cell projection. Its subcellular location is the cilium. It localises to the cytoplasm. It is found in the cytoskeleton. The protein resides in the microtubule organizing center. The protein localises to the centrosome. In terms of biological role, nucleolar protein that is involved in ribosomal RNA (rRNA) processing. Also plays a role in primary cilia resorption, and cell cycle progression in neurogenesis and neocortex development. Part of the small subunit (SSU) processome, first precursor of the small eukaryotic ribosomal subunit. During the assembly of the SSU processome in the nucleolus, many ribosome biogenesis factors, an RNA chaperone and ribosomal proteins associate with the nascent pre-rRNA and work in concert to generate RNA folding, modifications, rearrangements and cleavage as well as targeted degradation of pre-ribosomal RNA by the RNA exosome. The protein is Ribosomal RNA-processing protein 7 homolog A of Homo sapiens (Human).